The following is a 156-amino-acid chain: 3-dehydroquinate dehydratase 1 (156 aa).

The Proton acceptor role is filled by tyrosine 32. 3 residues coordinate substrate: asparagine 84, histidine 90, and aspartate 97. Residue histidine 110 is the Proton donor of the active site. Substrate is bound by residues 111–112 (LS) and arginine 121.

It belongs to the type-II 3-dehydroquinase family. Homododecamer.

The enzyme catalyses 3-dehydroquinate = 3-dehydroshikimate + H2O. The protein operates within metabolic intermediate biosynthesis; chorismate biosynthesis; chorismate from D-erythrose 4-phosphate and phosphoenolpyruvate: step 3/7. Catalyzes a trans-dehydration via an enolate intermediate. The polypeptide is 3-dehydroquinate dehydratase 1 (aroQ1) (Ralstonia nicotianae (strain ATCC BAA-1114 / GMI1000) (Ralstonia solanacearum)).